Reading from the N-terminus, the 280-residue chain is Cycloeucalenol cycloisomerase (280 aa).

6 helical membrane-spanning segments follow: residues 22 to 42, 53 to 73, 89 to 109, 167 to 187, 201 to 221, and 244 to 264; these read LFFL…VVPY, YLLL…LLVG, ANLW…HYFF, FEAA…TIAI, MYRV…PMFF, and AMLV…IVPL.

Its subcellular location is the membrane. The enzyme catalyses cycloeucalenol = obtusifoliol. In terms of biological role, converts pentacyclic cyclopropyl sterols to tetracyclic sterols. The protein is Cycloeucalenol cycloisomerase (CPI1) of Arabidopsis thaliana (Mouse-ear cress).